Here is a 555-residue protein sequence, read N- to C-terminus: Dihydroxy-acid dehydratase (555 aa).

Aspartate 78 is a Mg(2+) binding site. Cysteine 119 is a [2Fe-2S] cluster binding site. Aspartate 120 and lysine 121 together coordinate Mg(2+). An N6-carboxylysine modification is found at lysine 121. Cysteine 192 is a [2Fe-2S] cluster binding site. Glutamate 444 is a binding site for Mg(2+). Catalysis depends on serine 470, which acts as the Proton acceptor.

The protein belongs to the IlvD/Edd family. Homodimer. It depends on [2Fe-2S] cluster as a cofactor. Mg(2+) is required as a cofactor.

The enzyme catalyses (2R)-2,3-dihydroxy-3-methylbutanoate = 3-methyl-2-oxobutanoate + H2O. It catalyses the reaction (2R,3R)-2,3-dihydroxy-3-methylpentanoate = (S)-3-methyl-2-oxopentanoate + H2O. It functions in the pathway amino-acid biosynthesis; L-isoleucine biosynthesis; L-isoleucine from 2-oxobutanoate: step 3/4. Its pathway is amino-acid biosynthesis; L-valine biosynthesis; L-valine from pyruvate: step 3/4. Functions in the biosynthesis of branched-chain amino acids. Catalyzes the dehydration of (2R,3R)-2,3-dihydroxy-3-methylpentanoate (2,3-dihydroxy-3-methylvalerate) into 2-oxo-3-methylpentanoate (2-oxo-3-methylvalerate) and of (2R)-2,3-dihydroxy-3-methylbutanoate (2,3-dihydroxyisovalerate) into 2-oxo-3-methylbutanoate (2-oxoisovalerate), the penultimate precursor to L-isoleucine and L-valine, respectively. In Halalkalibacterium halodurans (strain ATCC BAA-125 / DSM 18197 / FERM 7344 / JCM 9153 / C-125) (Bacillus halodurans), this protein is Dihydroxy-acid dehydratase.